Here is a 394-residue protein sequence, read N- to C-terminus: p-hydroxybenzoate hydroxylase (394 aa).

FAD contacts are provided by residues S13, E32, 42-47 (RIRAGV), and Q102. Residues Y201, 212 to 214 (SQR), and Y222 each bind substrate. D286 contacts FAD. P293 contacts substrate. 299–300 (LN) contacts FAD.

Belongs to the aromatic-ring hydroxylase family. In terms of assembly, homodimer. The cofactor is FAD.

The enzyme catalyses 4-hydroxybenzoate + NADPH + O2 + H(+) = 3,4-dihydroxybenzoate + NADP(+) + H2O. It functions in the pathway aromatic compound metabolism; benzoate degradation via hydroxylation; 3,4-dihydroxybenzoate from benzoate: step 2/2. Functionally, catalyzes the incorporation of an atom of dioxygen into p-hydroxybenzoate (p-OHB) to form 3,4-dihydroxybenzoate (3,4DOHB). The reaction occurs in two parts: reduction of the flavin adenine dinucleotide (FAD) in the enzyme by reduced nicotinamide adenine dinucleotide phosphate (NADPH) in response to binding p-hydroxybenzoate to the enzyme and oxidation of reduced FAD with oxygen to form a hydroperoxide, which then oxygenates p-hydroxybenzoate. The polypeptide is p-hydroxybenzoate hydroxylase (pobA) (Pseudomonas fluorescens).